The chain runs to 166 residues: Small heat shock protein OV25-2 (166 aa).

Residues 38–149 form the sHSP domain; that stretch reads LNECNIGNSL…ASRNIPIRAS (112 aa). Residues 140–166 are disordered; it reads ASRNIPIRASPKEPEANQKSAINDAKQ.

It belongs to the small heat shock protein (HSP20) family.

The polypeptide is Small heat shock protein OV25-2 (OV25-2) (Onchocerca volvulus).